The sequence spans 297 residues: Salivary glue protein Sgs-4 (297 aa).

The N-terminal stretch at 1-21 is a signal peptide; that stretch reads MRLELLVVLLVGLAALAPSGS. 21 tandem repeats follow at residues 26-32, 33-39, 40-46, 47-53, 54-60, 61-67, 68-74, 75-81, 82-88, 89-95, 96-102, 103-109, 110-116, 117-123, 124-130, 131-137, 138-144, 145-151, 152-158, 159-165, and 166-172. The tract at residues 26 to 84 is disordered; the sequence is TEPPRCETEPPRCETEPPRCETEPPRCETEPPRCETTTPKCETTPPTCRTEPPTCKTEP. A 22 X 7 AA approximate tandem repeats of T-[ETK]-[PT]-P-[RKT]-C-[ERK] region spans residues 26–179; sequence TEPPRCETEP…TCKTEPPCEK (154 aa). Residues 27–58 are compositionally biased toward basic and acidic residues; it reads EPPRCETEPPRCETEPPRCETEPPRCETEPPR. Low complexity predominate over residues 59–84; that stretch reads CETTTPKCETTPPTCRTEPPTCKTEP. The segment covering 141-174 has biased composition (low complexity); sequence PTCKTEPPTCRTEPPTCKTEPPTCKTEPPTCKTE. Disordered regions lie at residues 141–218 and 243–297; these read PTCK…SGCG and PDSK…KGGC. Residues 173-179 form a 22; approximate repeat; that stretch reads TEPPCEK. Basic residues-rich tracts occupy residues 181-208 and 282-291; these read CTKRIKRHRTKRTKRSKSTKKIVHHHNR and NTTKKPRKTQ.

In terms of tissue distribution, salivary gland.

The protein resides in the secreted. In Drosophila melanogaster (Fruit fly), this protein is Salivary glue protein Sgs-4 (Sgs4).